Here is a 540-residue protein sequence, read N- to C-terminus: Probable LRR receptor-like serine/threonine-protein kinase RPK1 (540 aa).

The signal sequence occupies residues 1–19 (MKLLGLVFLLFNLFMFSFS). At 20–198 (RKLLTESGGG…PGKSGLYPIE (179 aa)) the chain is on the extracellular side. LRR repeat units follow at residues 118–142 (LSEIRVLSLSFNDLRGEIPKEIWGL) and 144–169 (KLEILDLKGNNFIGGIRVVDNVVLRK). Residues 199–219 (IASIVSASVIVFVLLVLVILF) traverse the membrane as a helical segment. The Cytoplasmic segment spans residues 220-540 (IYTRKWKRNS…LLKRIQPSRL (321 aa)). Threonine 250 and threonine 258 each carry phosphothreonine. The Protein kinase domain maps to 261–535 (FSNSNCIGHG…KQAVRLLKRI (275 aa)). Residues 267–275 (IGHGGFGST) and lysine 289 contribute to the ATP site. Tyrosine 334 and tyrosine 372 each carry phosphotyrosine. The Proton acceptor role is filled by aspartate 385. Residue tyrosine 427 is modified to Phosphotyrosine. A Phosphothreonine modification is found at threonine 435.

The protein belongs to the protein kinase superfamily. Ser/Thr protein kinase family. In terms of tissue distribution, expressed in roots, stems, leaves, and flowers.

It localises to the cell membrane. It carries out the reaction L-seryl-[protein] + ATP = O-phospho-L-seryl-[protein] + ADP + H(+). The enzyme catalyses L-threonyl-[protein] + ATP = O-phospho-L-threonyl-[protein] + ADP + H(+). In terms of biological role, involved in the main abscisic acid-mediated (ABA) signaling pathway and in early ABA perception. Together with RPK2, required for pattern formation along the radial axis (e.g. the apical embryonic domain cell types that generate cotyledon primordia), and the apical-basal axis (e.g. differentiation of the basal pole during early embryogenesis). The chain is Probable LRR receptor-like serine/threonine-protein kinase RPK1 (RPK1) from Arabidopsis thaliana (Mouse-ear cress).